A 197-amino-acid chain; its full sequence is Probable GTP-binding protein EngB (197 aa).

Residues 22–195 enclose the EngB-type G domain; it reads KRIEIAFVGR…LKVLESVIDF (174 aa). GTP-binding positions include 30–37, 57–61, 75–78, 142–145, and 174–176; these read GRSNVGKS, GKTRL, DLPG, TKVD, and FSS. Positions 37 and 59 each coordinate Mg(2+).

This sequence belongs to the TRAFAC class TrmE-Era-EngA-EngB-Septin-like GTPase superfamily. EngB GTPase family. Requires Mg(2+) as cofactor.

Necessary for normal cell division and for the maintenance of normal septation. This Clostridium kluyveri (strain ATCC 8527 / DSM 555 / NBRC 12016 / NCIMB 10680 / K1) protein is Probable GTP-binding protein EngB.